A 78-amino-acid chain; its full sequence is DNA-directed RNA polymerase subunit Rpo5 (78 aa).

It belongs to the archaeal Rpo5/eukaryotic RPB5 RNA polymerase subunit family. As to quaternary structure, part of the RNA polymerase complex.

The protein localises to the cytoplasm. It catalyses the reaction RNA(n) + a ribonucleoside 5'-triphosphate = RNA(n+1) + diphosphate. In terms of biological role, DNA-dependent RNA polymerase (RNAP) catalyzes the transcription of DNA into RNA using the four ribonucleoside triphosphates as substrates. The polypeptide is DNA-directed RNA polymerase subunit Rpo5 (Methanococcus maripaludis (strain C6 / ATCC BAA-1332)).